The sequence spans 1957 residues: [F-actin]-monooxygenase MICAL2 (1957 aa).

Residues G2–E494 form a monooxygenase domain region. FAD is bound by residues C97, E116–R118, R123–N125, F183, Y298, and D398. The Calponin-homology (CH) domain occupies D516–E619. At S631 the chain carries Phosphoserine. The short motif at R660–K681 is the Nuclear localization signal element. Disordered stretches follow at residues R660–K714 and Q886–H942. A compositionally biased stretch (polar residues) spans D687–K714. Residues P899–D910 are compositionally biased toward pro residues. The segment covering P911–P925 has biased composition (low complexity). Residues D1000–N1062 enclose the LIM zinc-binding domain. C1002, C1005, H1023, C1026, C1029, C1032, C1052, and H1055 together coordinate Zn(2+). Disordered regions lie at residues A1070–W1143, S1168–K1243, V1258–P1345, G1361–P1431, K1467–C1626, and E1675–K1779. Basic and acidic residues predominate over residues S1185–W1195. Residues R1232–K1243 show a composition bias toward polar residues. Over residues L1275–S1294 the composition is skewed to low complexity. The span at S1302–S1316 shows a compositional bias: polar residues. The interval T1324–D1363 is interaction with MAPK1. 2 stretches are compositionally biased toward basic and acidic residues: residues S1388–S1402 and G1413–P1431. Over residues V1485 to R1496 the composition is skewed to low complexity. Basic and acidic residues predominate over residues G1552–S1562. The span at C1570–T1579 shows a compositional bias: polar residues. A Phosphoserine modification is found at S1688. Residues A1718–T1733 show a composition bias toward pro residues. Residues A1751 to S1762 are compositionally biased toward low complexity. The bMERB domain occupies K1796–S1945.

The protein belongs to the Mical family. As to quaternary structure, interacts with PLXNA4. Interacts with RAB1B. Interacts with MAPK1/ERK2. Interacts with RAB35, RAB8A, RAB10, RAB13 and RAB15 (in their GTP-bound forms); binding to RAB35 is of low affinity compared to other Rab proteins; at least in case of RAB8A may bind 2 molecules of RAB8A simultaneously through a high and a low affinity binding site, respectively. May interact with MAPK1/ERK2. Interacts with CORO1C; this interaction recruits MICAL2 to the actin filaments. The cofactor is FAD.

Its subcellular location is the nucleus. The protein localises to the cytoplasm. The catalysed reaction is L-methionyl-[F-actin] + NADPH + O2 + H(+) = L-methionyl-(R)-S-oxide-[F-actin] + NADP(+) + H2O. Specifically inhibited by CCG-1423, a small molecule inhibitor of SRF:MKL1/MRTF-A-dependent transcription. Functionally, methionine monooxygenase that promotes depolymerization of F-actin by mediating oxidation of residues 'Met-44' and 'Met-47' on actin to form methionine-sulfoxide, resulting in actin filament disassembly and preventing repolymerization. Regulates the disassembly of branched actin networks also by oxidizing ARP3B-containing ARP2/3 complexes leading to ARP3B dissociation from the network. Acts as a key regulator of the SRF signaling pathway elicited by nerve growth factor and serum: mediates oxidation and subsequent depolymerization of nuclear actin, leading to increase MKL1/MRTF-A presence in the nucleus and promote SRF:MKL1/MRTF-A-dependent gene transcription. Does not activate SRF:MKL1/MRTF-A through RhoA. The protein is [F-actin]-monooxygenase MICAL2 of Homo sapiens (Human).